A 133-amino-acid chain; its full sequence is Small ribosomal subunit protein uS8 (133 aa).

This sequence belongs to the universal ribosomal protein uS8 family. Part of the 30S ribosomal subunit. Contacts proteins S5 and S12.

In terms of biological role, one of the primary rRNA binding proteins, it binds directly to 16S rRNA central domain where it helps coordinate assembly of the platform of the 30S subunit. This chain is Small ribosomal subunit protein uS8, found in Parasynechococcus marenigrum (strain WH8102).